The sequence spans 405 residues: Arginine biosynthesis bifunctional protein ArgJ (405 aa).

Residues T152, K178, T189, E276, N400, and S405 each coordinate substrate. T189 serves as the catalytic Nucleophile.

This sequence belongs to the ArgJ family. As to quaternary structure, heterotetramer of two alpha and two beta chains.

It localises to the cytoplasm. The enzyme catalyses N(2)-acetyl-L-ornithine + L-glutamate = N-acetyl-L-glutamate + L-ornithine. The catalysed reaction is L-glutamate + acetyl-CoA = N-acetyl-L-glutamate + CoA + H(+). It functions in the pathway amino-acid biosynthesis; L-arginine biosynthesis; L-ornithine and N-acetyl-L-glutamate from L-glutamate and N(2)-acetyl-L-ornithine (cyclic): step 1/1. It participates in amino-acid biosynthesis; L-arginine biosynthesis; N(2)-acetyl-L-ornithine from L-glutamate: step 1/4. In terms of biological role, catalyzes two activities which are involved in the cyclic version of arginine biosynthesis: the synthesis of N-acetylglutamate from glutamate and acetyl-CoA as the acetyl donor, and of ornithine by transacetylation between N(2)-acetylornithine and glutamate. The protein is Arginine biosynthesis bifunctional protein ArgJ of Chromobacterium violaceum (strain ATCC 12472 / DSM 30191 / JCM 1249 / CCUG 213 / NBRC 12614 / NCIMB 9131 / NCTC 9757 / MK).